A 271-amino-acid polypeptide reads, in one-letter code: Probable diacyglycerol O-acyltransferase tgs3 (271 aa).

It belongs to the long-chain O-acyltransferase family.

It carries out the reaction an acyl-CoA + a 1,2-diacyl-sn-glycerol = a triacyl-sn-glycerol + CoA. It functions in the pathway glycerolipid metabolism; triacylglycerol biosynthesis. Its function is as follows. Catalyzes the terminal and only committed step in triacylglycerol synthesis by using diacylglycerol and fatty acyl CoA as substrates. Required for storage lipid synthesis. This Mycobacterium tuberculosis (strain CDC 1551 / Oshkosh) protein is Probable diacyglycerol O-acyltransferase tgs3 (tgs3).